Consider the following 1647-residue polypeptide: Putative RNA exonuclease pqe-1 (1647 aa).

4 disordered regions span residues 1-199 (MFNG…QVQN), 274-393 (QTPA…TSLP), 515-619 (MMQQ…KPVI), and 641-665 (QVKQEIPEVSSTSDATKSDAAPTAR). Low complexity-rich tracts occupy residues 30–64 (GPSQNAQQQQQQASAPGTSSGGPSQAVSGASSGAS) and 99–131 (TQPQQRQQQQSQPQARQMSTQQAANLRKNAAAA). Polar residues predominate over residues 143 to 170 (SREQGNAHQPTAGQIPQSSNQPAQQTHN). Composition is skewed to low complexity over residues 274-297 (QTPARGRPANAQLAQNAQQRNPQQ) and 515-526 (MMQQQAMQMQMQ). Pro residues predominate over residues 527-540 (NPPPVHQQPPPQQP). Residues 541–555 (PQQQRQKQQRSQPAP) show a composition bias toward low complexity. Basic and acidic residues predominate over residues 592–601 (SKIEPVDVKP). The segment covering 650–664 (SSTSDATKSDAAPTA) has biased composition (low complexity). Positions 686–726 (SAKKFERMKAEAEDKEDMKKKIAALQEALFNIQEERRVEKE) form a coiled coil. A compositionally biased stretch (polar residues) spans 736-756 (AVPQNQPASSVQIAQVSTSES). Residues 736 to 1174 (AVPQNQPASS…LRNKKHTTEE (439 aa)) form a disordered region. Positions 761-772 (TSEAAATETMTS) are enriched in low complexity. Acidic residues predominate over residues 783–793 (TEGEQEEDEDE). The span at 822–833 (RSDEKREKRHVS) shows a compositional bias: basic and acidic residues. The segment covering 878-905 (DNEDDDADSFVVGDDEPIEYEEEDEDDM) has biased composition (acidic residues). The segment covering 977 to 992 (TPTASSSMSSSTLSYC) has biased composition (low complexity). Positions 1018-1031 (KTREENRERKRLAQ) are enriched in basic and acidic residues. Polar residues predominate over residues 1038–1054 (SETTGVRRTLRSTQDNS). Composition is skewed to basic and acidic residues over residues 1076–1088 (AKSSENRAKEKQK) and 1139–1174 (NHTEMLDKRNKESEEKRRKDRDELERLRNKKHTTEE). Residues 1142-1187 (EMLDKRNKESEEKRRKDRDELERLRNKKHTTEEEKIKMARLQNALK) adopt a coiled-coil conformation. One can recognise an Exonuclease domain in the interval 1477–1637 (RVYALDCEMV…IFYGLRNPES (161 aa)).

The protein belongs to the REXO1/REXO3 family. As to expression, expressed in the excretory canal, vulval cells, the intestine and in head and tail neurons including ASH, RIC and AIZ neurons.

Its subcellular location is the nucleus. In terms of biological role, putative RNA exonuclease which protects neurons from the toxic effects of expanded poly-Q disease proteins. It is unknown whether this is via participation in the pathogenic mechanism underlying poly-Q-induced neurodegeneration or if it is by acting as a genetic modifier of the age of onset or progression of neurodegeneration. Regulates gene expression in neurons. This is Putative RNA exonuclease pqe-1 from Caenorhabditis elegans.